Here is a 535-residue protein sequence, read N- to C-terminus: GMP synthase [glutamine-hydrolyzing] (535 aa).

A Glutamine amidotransferase type-1 domain is found at 4–210; the sequence is KILILDFGSQ…VHEICKCKPD (207 aa). C85 (nucleophile) is an active-site residue. Residues H184 and E186 contribute to the active site. One can recognise a GMPS ATP-PPase domain in the interval 211 to 403; it reads WVMGDYIAEA…LGLPREMVYR (193 aa). 238–244 contacts ATP; sequence SGGVDSS.

In terms of assembly, homodimer.

The catalysed reaction is XMP + L-glutamine + ATP + H2O = GMP + L-glutamate + AMP + diphosphate + 2 H(+). The protein operates within purine metabolism; GMP biosynthesis; GMP from XMP (L-Gln route): step 1/1. Functionally, catalyzes the synthesis of GMP from XMP. The chain is GMP synthase [glutamine-hydrolyzing] from Polynucleobacter necessarius subsp. necessarius (strain STIR1).